We begin with the raw amino-acid sequence, 143 residues long: Peptide methionine sulfoxide reductase MsrB (143 aa).

A MsrB domain is found at 16–139; sequence DAELRRRLTP…NSAALNFESR (124 aa). 4 residues coordinate Zn(2+): Cys-55, Cys-58, Cys-104, and Cys-107. The active-site Nucleophile is the Cys-128.

It belongs to the MsrB Met sulfoxide reductase family. Requires Zn(2+) as cofactor.

The enzyme catalyses L-methionyl-[protein] + [thioredoxin]-disulfide + H2O = L-methionyl-(R)-S-oxide-[protein] + [thioredoxin]-dithiol. The sequence is that of Peptide methionine sulfoxide reductase MsrB from Burkholderia multivorans (strain ATCC 17616 / 249).